The primary structure comprises 455 residues: UDP-glycosyltransferase 2 (455 aa).

Belongs to the UDP-glycosyltransferase family.

It carries out the reaction exophillate + UDP-alpha-D-galactose = phaeomoniecin D + UDP + H(+). It participates in secondary metabolite biosynthesis. In terms of biological role, catalyzes the second glycosylation step during phaeomoniecin D biosynthesis, the further O-galactosylation of exophillic acid (produced by the O-glycosyltransferase OGT1) to yield the 4-O-beta-D-galactoside phaeomoniecin D. In Phaeomoniella chlamydospora (Phaeoacremonium chlamydosporum), this protein is UDP-glycosyltransferase 2.